Here is a 123-residue protein sequence, read N- to C-terminus: Large ribosomal subunit protein uL29 (123 aa).

Lysine 19 is modified (N6-acetyllysine). Lysine 25 participates in a covalent cross-link: Glycyl lysine isopeptide (Lys-Gly) (interchain with G-Cter in SUMO2). Serine 29 is subject to Phosphoserine. Lysine 43 bears the N6-acetyllysine mark. Residues 85 to 123 form a disordered region; the sequence is PKKTRAMRRRLNKHEESLKTKKQQRKERLYPLRKYAVKA. Basic residues predominate over residues 86–96; that stretch reads KKTRAMRRRLN.

This sequence belongs to the universal ribosomal protein uL29 family. In terms of assembly, component of the large ribosomal subunit.

It is found in the cytoplasm. Functionally, component of the large ribosomal subunit. The ribosome is a large ribonucleoprotein complex responsible for the synthesis of proteins in the cell. The polypeptide is Large ribosomal subunit protein uL29 (RPL35) (Oryctolagus cuniculus (Rabbit)).